Consider the following 950-residue polypeptide: Protocadherin alpha-9 (950 aa).

Residues Met1–Gly29 form the signal peptide. 6 consecutive Cadherin domains span residues Gln30–Phe133, Pro134–Phe242, Asp243–Leu350, Thr351–Phe455, Ala456–Leu565, and Gly588–Ser678. Over Gln30 to Asn697 the chain is Extracellular. N-linked (GlcNAc...) asparagine glycans are attached at residues Asn254 and Asn265. Asn548 is a glycosylation site (N-linked (GlcNAc...) asparagine). A helical membrane pass occupies residues Val698–Tyr718. The Cytoplasmic portion of the chain corresponds to Thr719–Gln950. The PXXP 1 repeat unit spans residues Pro734–Pro737. Positions Pro734–Pro894 are 5 X 4 AA repeats of P-X-X-P. Disordered stretches follow at residues Met770–Tyr808, Ile827–Pro856, and Tyr871–Gln950. Polar residues predominate over residues Pro789 to Lys798. PXXP repeat units lie at residues Pro799–Pro802, Pro832–Pro835, Pro873–Pro876, and Pro891–Pro894. The span at Asp909 to Lys923 shows a compositional bias: basic and acidic residues.

Its subcellular location is the cell membrane. Potential calcium-dependent cell-adhesion protein. May be involved in the establishment and maintenance of specific neuronal connections in the brain. The protein is Protocadherin alpha-9 (PCDHA9) of Homo sapiens (Human).